The sequence spans 417 residues: Mast cell carboxypeptidase A (417 aa).

An N-terminal signal peptide occupies residues Met-1–Ala-15. The propeptide at Ile-16–Glu-109 is activation peptide. The 295-residue stretch at Lys-118–Ile-412 folds into the Peptidase M14 domain. Intrachain disulfides connect Cys-173-Cys-186 and Cys-245-Cys-268. Positions 176 and 179 each coordinate Zn(2+). A Zn(2+)-binding site is contributed by His-304. The Proton donor/acceptor role is filled by Glu-378.

Belongs to the peptidase M14 family. The cofactor is Zn(2+).

The protein localises to the cytoplasmic vesicle. Its subcellular location is the secretory vesicle. The catalysed reaction is Release of a C-terminal amino acid, but little or no action with -Asp, -Glu, -Arg, -Lys or -Pro.. This is Mast cell carboxypeptidase A (Cpa3) from Mus musculus (Mouse).